The following is a 279-amino-acid chain: Tryptophan synthase alpha chain (279 aa).

Catalysis depends on proton acceptor residues Glu50 and Asp61.

The protein belongs to the TrpA family. As to quaternary structure, tetramer of two alpha and two beta chains.

The catalysed reaction is (1S,2R)-1-C-(indol-3-yl)glycerol 3-phosphate + L-serine = D-glyceraldehyde 3-phosphate + L-tryptophan + H2O. The protein operates within amino-acid biosynthesis; L-tryptophan biosynthesis; L-tryptophan from chorismate: step 5/5. The alpha subunit is responsible for the aldol cleavage of indoleglycerol phosphate to indole and glyceraldehyde 3-phosphate. In Sinorhizobium medicae (strain WSM419) (Ensifer medicae), this protein is Tryptophan synthase alpha chain.